Reading from the N-terminus, the 93-residue chain is Translation initiation factor IF-1 (93 aa).

In terms of domain architecture, S1-like spans 1 to 72 (MAKEELIQFE…EKGRLIFRHK (72 aa)). Positions 69-93 (FRHKDERPSGAPRGGPPRGGQFRRR) are disordered.

This sequence belongs to the IF-1 family. As to quaternary structure, component of the 30S ribosomal translation pre-initiation complex which assembles on the 30S ribosome in the order IF-2 and IF-3, IF-1 and N-formylmethionyl-tRNA(fMet); mRNA recruitment can occur at any time during PIC assembly.

The protein localises to the cytoplasm. One of the essential components for the initiation of protein synthesis. Stabilizes the binding of IF-2 and IF-3 on the 30S subunit to which N-formylmethionyl-tRNA(fMet) subsequently binds. Helps modulate mRNA selection, yielding the 30S pre-initiation complex (PIC). Upon addition of the 50S ribosomal subunit IF-1, IF-2 and IF-3 are released leaving the mature 70S translation initiation complex. This Nitrobacter hamburgensis (strain DSM 10229 / NCIMB 13809 / X14) protein is Translation initiation factor IF-1.